The chain runs to 289 residues: Glycine--tRNA ligase alpha subunit (289 aa).

Belongs to the class-II aminoacyl-tRNA synthetase family. Tetramer of two alpha and two beta subunits.

Its subcellular location is the cytoplasm. It carries out the reaction tRNA(Gly) + glycine + ATP = glycyl-tRNA(Gly) + AMP + diphosphate. This Prochlorococcus marinus subsp. pastoris (strain CCMP1986 / NIES-2087 / MED4) protein is Glycine--tRNA ligase alpha subunit.